Reading from the N-terminus, the 206-residue chain is Small ribosomal subunit protein uS4 (206 aa).

The S4 RNA-binding domain maps to 96–156 (TRLDNVVYRM…EKSRTQARIK (61 aa)).

This sequence belongs to the universal ribosomal protein uS4 family. In terms of assembly, part of the 30S ribosomal subunit. Contacts protein S5. The interaction surface between S4 and S5 is involved in control of translational fidelity.

In terms of biological role, one of the primary rRNA binding proteins, it binds directly to 16S rRNA where it nucleates assembly of the body of the 30S subunit. Functionally, with S5 and S12 plays an important role in translational accuracy. The protein is Small ribosomal subunit protein uS4 of Shewanella putrefaciens (strain CN-32 / ATCC BAA-453).